The sequence spans 394 residues: S-adenosylmethionine synthase 2 (394 aa).

E11 is a Mg(2+) binding site. H17 serves as a coordination point for ATP. E45 contacts K(+). L-methionine is bound by residues E58 and Q101. Residues 169–171 (DGK), 237–240 (SGRF), D248, 254–255 (RK), A271, K275, and K279 each bind ATP. D248 is a binding site for L-methionine. K279 serves as a coordination point for L-methionine.

This sequence belongs to the AdoMet synthase family. In terms of assembly, homotetramer. It depends on Mn(2+) as a cofactor. The cofactor is Mg(2+). Co(2+) is required as a cofactor. Requires K(+) as cofactor.

The protein resides in the cytoplasm. The enzyme catalyses L-methionine + ATP + H2O = S-adenosyl-L-methionine + phosphate + diphosphate. It participates in amino-acid biosynthesis; S-adenosyl-L-methionine biosynthesis; S-adenosyl-L-methionine from L-methionine: step 1/1. Catalyzes the formation of S-adenosylmethionine from methionine and ATP. The reaction comprises two steps that are both catalyzed by the same enzyme: formation of S-adenosylmethionine (AdoMet) and triphosphate, and subsequent hydrolysis of the triphosphate. The polypeptide is S-adenosylmethionine synthase 2 (SAM2) (Oryza sativa subsp. japonica (Rice)).